The chain runs to 322 residues: MFEIHPVKKVSVVIPVYNEQESLPELIRRTTTACESLGKEYEILLIDDGSSDNSAHMLVEASQAENSHIVSILLNRNYGQHSAIMAGFSHVTGDLIITLDADLQNPPEEIPRLVAKADEGYDVVGTVRQNRQDSWFRKTASKMINRLIQRTTGKAMGDYGCMLRAYRRHIVDAMLHCHERSTFIPILANIFARRAIEIPVHHAEREYGESKYSFMRLINLMYDLVTCLTTTPLRMLSLLGSIIAIGGFSIAVLLVILRLTFGPQWAAEGVFMLFAVLFTFIGAQFIGMGLLGEYIGRIYTDVRARPRYFVQQVIRPSSKENE.

Residues 1 to 235 (MFEIHPVKKV…TCLTTTPLRM (235 aa)) are Cytoplasmic-facing. Residues 236–256 (LSLLGSIIAIGGFSIAVLLVI) traverse the membrane as a helical segment. The Periplasmic portion of the chain corresponds to 257–269 (LRLTFGPQWAAEG). Residues 270–290 (VFMLFAVLFTFIGAQFIGMGL) form a helical membrane-spanning segment. Residues 291–322 (LGEYIGRIYTDVRARPRYFVQQVIRPSSKENE) are Cytoplasmic-facing.

Belongs to the glycosyltransferase 2 family.

The protein localises to the cell inner membrane. It catalyses the reaction UDP-4-deoxy-4-formamido-beta-L-arabinose + di-trans,octa-cis-undecaprenyl phosphate = 4-deoxy-4-formamido-alpha-L-arabinopyranosyl di-trans,octa-cis-undecaprenyl phosphate + UDP. Its pathway is glycolipid biosynthesis; 4-amino-4-deoxy-alpha-L-arabinose undecaprenyl phosphate biosynthesis; 4-amino-4-deoxy-alpha-L-arabinose undecaprenyl phosphate from UDP-4-deoxy-4-formamido-beta-L-arabinose and undecaprenyl phosphate: step 1/2. It participates in bacterial outer membrane biogenesis; lipopolysaccharide biosynthesis. Catalyzes the transfer of 4-deoxy-4-formamido-L-arabinose from UDP to undecaprenyl phosphate. The modified arabinose is attached to lipid A and is required for resistance to polymyxin and cationic antimicrobial peptides. The polypeptide is Undecaprenyl-phosphate 4-deoxy-4-formamido-L-arabinose transferase (Shigella dysenteriae serotype 1 (strain Sd197)).